We begin with the raw amino-acid sequence, 416 residues long: GTPase Obg (416 aa).

The Obg domain occupies 1-157; that stretch reads MFQDVLVITV…RRLRLELMLI (157 aa). Disordered regions lie at residues 25–44 and 62–82; these read EKFVPKGGPDGGDGGRGGSV and TYKAEDGEHGRGSQQHGRGGE. Residues 32–42 are compositionally biased toward gly residues; it reads GPDGGDGGRGG. Positions 63-72 are enriched in basic and acidic residues; it reads YKAEDGEHGR. The 167-residue stretch at 158-324 folds into the OBG-type G domain; that stretch reads ADVGLVGYPN…LKEALHALVR (167 aa). Residues 164-171, 189-193, 211-214, 277-280, and 305-307 contribute to the GTP site; these read GYPNAGKS, FTTLS, DIPG, NKVD, and SAL. The Mg(2+) site is built by serine 171 and threonine 191. Residues 336–414 enclose the OCT domain; sequence PRKEVQAGVE…IGGLEFEYIP (79 aa).

The protein belongs to the TRAFAC class OBG-HflX-like GTPase superfamily. OBG GTPase family. As to quaternary structure, monomer. Mg(2+) is required as a cofactor.

The protein localises to the cytoplasm. In terms of biological role, an essential GTPase which binds GTP, GDP and possibly (p)ppGpp with moderate affinity, with high nucleotide exchange rates and a fairly low GTP hydrolysis rate. Plays a role in control of the cell cycle, stress response, ribosome biogenesis and in those bacteria that undergo differentiation, in morphogenesis control. This is GTPase Obg from Thermus thermophilus (strain ATCC 27634 / DSM 579 / HB8).